A 706-amino-acid chain; its full sequence is Fatty acid oxidation complex subunit alpha (706 aa).

Residues 1–188 (MEKTFNLTRR…KMGLVNDVVP (188 aa)) form an enoyl-CoA hydratase region. The tract at residues 308 to 706 (RKVKKAVILG…TMAQENAHFF (399 aa)) is 3-hydroxyacyl-CoA dehydrogenase.

It in the N-terminal section; belongs to the enoyl-CoA hydratase/isomerase family. This sequence in the central section; belongs to the 3-hydroxyacyl-CoA dehydrogenase family. In terms of assembly, heterotetramer of two alpha chains (FadJ) and two beta chains (FadI).

It is found in the cytoplasm. The catalysed reaction is a (3S)-3-hydroxyacyl-CoA = a (2E)-enoyl-CoA + H2O. It catalyses the reaction a 4-saturated-(3S)-3-hydroxyacyl-CoA = a (3E)-enoyl-CoA + H2O. The enzyme catalyses a (3S)-3-hydroxyacyl-CoA + NAD(+) = a 3-oxoacyl-CoA + NADH + H(+). It carries out the reaction (3S)-3-hydroxybutanoyl-CoA = (3R)-3-hydroxybutanoyl-CoA. Its pathway is lipid metabolism; fatty acid beta-oxidation. Functionally, catalyzes the formation of a hydroxyacyl-CoA by addition of water on enoyl-CoA. Also exhibits 3-hydroxyacyl-CoA epimerase and 3-hydroxyacyl-CoA dehydrogenase activities. This Shewanella baltica (strain OS185) protein is Fatty acid oxidation complex subunit alpha.